The chain runs to 391 residues: Na(+)/H(+) antiporter NhaA (391 aa).

11 consecutive transmembrane segments (helical) span residues 14–34 (AGGILLVIAAAIAMTIANSPL), 47–67 (FGMSVSHWINDGLMAVFFLLI), 87–107 (IFPAIAAVGGMLAPALIYVAF), 117–137 (GWAIPAATDIAFALGIMALLG), 146–166 (VFLLALAIIDDLGVVVIIALF), 171–191 (LSTMALLVGFAMTGVLFMLNA), 205–225 (AILWFAVLKSGVHATLAGVVI), 252–272 (VAFGILPLFAFANAGISLEGV), 280–300 (MLPLGIALGLLVGKPLGIFTF), 318–338 (FIHIFAVSVLCGIGFTMSIFI), and 356–376 (LGILMGSTTAAIIGYVLLHFS).

It belongs to the NhaA Na(+)/H(+) (TC 2.A.33) antiporter family.

The protein localises to the cell inner membrane. The enzyme catalyses Na(+)(in) + 2 H(+)(out) = Na(+)(out) + 2 H(+)(in). Na(+)/H(+) antiporter that extrudes sodium in exchange for external protons. In Vibrio campbellii (strain ATCC BAA-1116), this protein is Na(+)/H(+) antiporter NhaA.